Reading from the N-terminus, the 773-residue chain is Molybdenum cofactor sulfurase (773 aa).

An N6-(pyridoxal phosphate)lysine modification is found at Lys243. Residue Cys410 is part of the active site. The region spanning 632 to 773 (LRLLRQSGQR…LSCGDTVLVE (142 aa)) is the MOSC domain. Phosphoserine is present on Ser731.

The protein belongs to the class-V pyridoxal-phosphate-dependent aminotransferase family. MOCOS subfamily. Requires pyridoxal 5'-phosphate as cofactor.

It carries out the reaction Mo-molybdopterin + L-cysteine + AH2 = thio-Mo-molybdopterin + L-alanine + A + H2O. It functions in the pathway cofactor biosynthesis; molybdopterin biosynthesis. In terms of biological role, sulfurates the molybdenum cofactor. Sulfation of molybdenum is essential for xanthine dehydrogenase (XDH) and aldehyde oxidase (ADO) enzymes in which molybdenum cofactor is liganded by 1 oxygen and 1 sulfur atom in active form. The chain is Molybdenum cofactor sulfurase from Drosophila ananassae (Fruit fly).